A 226-amino-acid chain; its full sequence is MMTNLFSVFDPSTTIFNMSLNWFSTFIGLLIIPSTFWLMPNRFQIIWNNILLTLHKEFKTLLGPNGHNGSTLMFVSLFSLIMFNNFLGLFPYIFTSTSHLTLTLTLAFPLWLSFMLYGWICHTQHMFAHLVPQGTPPMLMPFMVCIKTISNVIRPGTLAVRLTANMIAGHLLMTLLGNTGPMSTSYIILSMILITQIALLVLESAVAIIQSYVFAVLSTLYSSEVN.

5 consecutive transmembrane segments (helical) span residues leucine 20–proline 40, phenylalanine 74–phenylalanine 94, leucine 100–isoleucine 120, leucine 162–methionine 182, and isoleucine 187–alanine 207.

This sequence belongs to the ATPase A chain family. In terms of assembly, F-type ATPases have 2 components, CF(1) - the catalytic core - and CF(0) - the membrane proton channel. CF(1) has five subunits: alpha(3), beta(3), gamma(1), delta(1), epsilon(1). CF(0) has three main subunits: a, b and c.

It is found in the mitochondrion inner membrane. Functionally, mitochondrial membrane ATP synthase (F(1)F(0) ATP synthase or Complex V) produces ATP from ADP in the presence of a proton gradient across the membrane which is generated by electron transport complexes of the respiratory chain. F-type ATPases consist of two structural domains, F(1) - containing the extramembraneous catalytic core and F(0) - containing the membrane proton channel, linked together by a central stalk and a peripheral stalk. During catalysis, ATP synthesis in the catalytic domain of F(1) is coupled via a rotary mechanism of the central stalk subunits to proton translocation. Key component of the proton channel; it may play a direct role in the translocation of protons across the membrane. The polypeptide is ATP synthase subunit a (mt:ATPase6) (Aedes albopictus (Asian tiger mosquito)).